Reading from the N-terminus, the 515-residue chain is N-fatty-acyl-amino acid synthase/hydrolase PM20D1.1 (515 aa).

An N-terminal signal peptide occupies residues 1–34 (MKTKFTKKTVLKFFGILFAILLLSVLILFSVVIG). Residues Asn-50, Asn-87, and Asn-118 are each glycosylated (N-linked (GlcNAc...) asparagine). His-140 is a binding site for Zn(2+). Asp-142 is an active-site residue. Asp-173 provides a ligand contact to Zn(2+). Glu-207 serves as the catalytic Proton acceptor. Residues Glu-208, Asp-234, and His-480 each coordinate Zn(2+).

It belongs to the peptidase M20A family. Zn(2+) is required as a cofactor.

Its subcellular location is the secreted. It carries out the reaction an N-acyl-L-amino acid + H2O = an L-alpha-amino acid + a carboxylate. The catalysed reaction is an N-acyl-aromatic L-alpha-amino acid + H2O = an aromatic L-alpha-amino acid + a carboxylate. It catalyses the reaction N-(5Z,8Z,11Z,14Z)-eicosatetraenoyl-glycine + H2O = (5Z,8Z,11Z,14Z)-eicosatetraenoate + glycine. The enzyme catalyses N-hexadecanoyl-L-phenylalanine + H2O = hexadecanoate + L-phenylalanine. It carries out the reaction N-octadecanoyl-L-phenylalanine + H2O = octadecanoate + L-phenylalanine. The catalysed reaction is N-(4Z,7Z,10Z,13Z,16Z,19Z-docosahexaenoyl)-L-phenylalanine + H2O = (4Z,7Z,10Z,13Z,16Z,19Z)-docosahexaenoate + L-phenylalanine. It catalyses the reaction N-(9Z-octadecenoyl)-L-asparagine + H2O = L-asparagine + (9Z)-octadecenoate. The enzyme catalyses (9Z)-octadecenoate + glycine = N-(9Z-octadecenoyl)glycine + H2O. It carries out the reaction N-(9Z-octadecenoyl)-L-lysine + H2O = L-lysine + (9Z)-octadecenoate. The catalysed reaction is N-(9Z-octadecenoyl)-L-methionine + H2O = (9Z)-octadecenoate + L-methionine. It catalyses the reaction N-(9Z-octadecenoyl)-L-serine + H2O = L-serine + (9Z)-octadecenoate. The enzyme catalyses N-(9Z-octadecenoyl)-L-tryptophan + H2O = L-tryptophan + (9Z)-octadecenoate. It carries out the reaction N-(9Z-octadecenoyl)-L-tyrosine + H2O = L-tyrosine + (9Z)-octadecenoate. The catalysed reaction is N-(9Z-octadecenoyl)-L-glutamine + H2O = L-glutamine + (9Z)-octadecenoate. It catalyses the reaction N-(5Z,8Z,11Z,14Z-eicosatetraenoyl)-L-serine + H2O = (5Z,8Z,11Z,14Z)-eicosatetraenoate + L-serine. The enzyme catalyses (5Z,8Z,11Z,14Z)-eicosatetraenoate + L-phenylalanine = N-(5Z,8Z,11Z,14Z-eicosatetraenoyl)-L-phenylalanine + H2O. It carries out the reaction N-(9Z-octadecenoyl)-L-leucine + H2O = L-leucine + (9Z)-octadecenoate. The catalysed reaction is L-phenylalanine + (9Z)-octadecenoate = N-(9Z-octadecenoyl)-L-phenylalanine + H2O. It functions in the pathway amino-acid metabolism. Its pathway is energy metabolism; electron transfer. It participates in lipid metabolism; fatty acid metabolism. Its activity is regulated as follows. Lipoproteins are powerful coactivators of PM20D1 activity in vitro and NAA biosynthesis in vivo. Secreted enzyme that regulates the endogenous N-fatty acyl amino acid (NAAs) tissue and circulating levels by functioning as a bidirectional NAA synthase/hydrolase. It condenses free fatty acids and free amino acids to generate NAAs and bidirectionally catalyzes the reverse hydrolysis reaction. Some of these NAAs stimulate oxidative metabolism via mitochondrial uncoupling, increasing energy expenditure in a UPC1-independent manner. Thereby, this secreted protein may indirectly regulate whole body energy expenditure. PM20D1 circulates in tight association with both low- and high-density (LDL and HDL,respectively) lipoprotein particles. The polypeptide is N-fatty-acyl-amino acid synthase/hydrolase PM20D1.1 (Danio rerio (Zebrafish)).